Reading from the N-terminus, the 54-residue chain is MLLCFHMCQRIMWLPFDLMKWRRFHCGAVLVGTLSLRNRSPKILSLYFISDRTG.

Residues 1–13 (MLLCFHMCQRIMW) form the signal peptide.

The protein localises to the secreted. This is an uncharacterized protein from Saccharomyces cerevisiae (strain ATCC 204508 / S288c) (Baker's yeast).